The following is a 143-amino-acid chain: Transcriptional regulator MraZ (143 aa).

2 consecutive SpoVT-AbrB domains span residues 6-49 (TYNH…NEAE) and 78-121 (SDET…DLKV).

This sequence belongs to the MraZ family. In terms of assembly, forms oligomers.

The protein localises to the cytoplasm. Its subcellular location is the nucleoid. The chain is Transcriptional regulator MraZ from Spiroplasma kunkelii.